Consider the following 340-residue polypeptide: DnaJ homolog subfamily B member 1 (340 aa).

The J domain occupies 2–70 (GKDYYQTLGL…REIFDRYGEE (69 aa)). At threonine 307 the chain carries Phosphothreonine.

In terms of assembly, interacts with DNAJC3. Interacts with HSF1 (via transactivation domain); this interaction results in the inhibition of heat shock- and HSF1-induced transcriptional activity during the attenuation and recovery phase period of the heat shock response. Interacts with BAG3.

It is found in the cytoplasm. The protein localises to the nucleus. Its subcellular location is the nucleolus. Interacts with HSP70 and can stimulate its ATPase activity. Stimulates the association between HSC70 and HIP. Negatively regulates heat shock-induced HSF1 transcriptional activity during the attenuation and recovery phase period of the heat shock response. Stimulates ATP hydrolysis and the folding of unfolded proteins mediated by HSPA1A/B (in vitro). The sequence is that of DnaJ homolog subfamily B member 1 (DNAJB1) from Homo sapiens (Human).